The primary structure comprises 674 residues: DNA ligase (674 aa).

NAD(+) is bound by residues 42-46 (DNVYD), 91-92 (SM), and Glu121. Lys123 acts as the N6-AMP-lysine intermediate in catalysis. Residues Arg144, Glu178, Lys294, and Lys318 each contribute to the NAD(+) site. Zn(2+)-binding residues include Cys412, Cys415, Cys430, and Cys435. The BRCT domain maps to 596–674 (VKDSFVAGKT…ETELLANLKD (79 aa)).

It belongs to the NAD-dependent DNA ligase family. LigA subfamily. It depends on Mg(2+) as a cofactor. The cofactor is Mn(2+).

The catalysed reaction is NAD(+) + (deoxyribonucleotide)n-3'-hydroxyl + 5'-phospho-(deoxyribonucleotide)m = (deoxyribonucleotide)n+m + AMP + beta-nicotinamide D-nucleotide.. DNA ligase that catalyzes the formation of phosphodiester linkages between 5'-phosphoryl and 3'-hydroxyl groups in double-stranded DNA using NAD as a coenzyme and as the energy source for the reaction. It is essential for DNA replication and repair of damaged DNA. The sequence is that of DNA ligase from Lacticaseibacillus paracasei (strain ATCC 334 / BCRC 17002 / CCUG 31169 / CIP 107868 / KCTC 3260 / NRRL B-441) (Lactobacillus paracasei).